Consider the following 220-residue polypeptide: Large ribosomal subunit protein uL1 (220 aa).

It belongs to the universal ribosomal protein uL1 family. In terms of assembly, part of the 50S ribosomal subunit.

Functionally, binds directly to 23S rRNA. The L1 stalk is quite mobile in the ribosome, and is involved in E site tRNA release. Protein L1 is also a translational repressor protein, it controls the translation of the L11 operon by binding to its mRNA. The polypeptide is Large ribosomal subunit protein uL1 (Ehrlichia chaffeensis (strain ATCC CRL-10679 / Arkansas)).